The sequence spans 605 residues: F-box/WD repeat-containing protein pof1 (605 aa).

Positions 107-153 constitute an F-box domain; it reads LDFLSLLPVEISFRILSFLDARSLCQAAQVSKHWKELADDDVIWHRM. Residues 195–212 show a composition bias toward basic and acidic residues; sequence GVDQAHESSPVKKAKLDD. The disordered stretch occupies residues 195–231; the sequence is GVDQAHESSPVKKAKLDDYPTSSNEETISSVKPPSPN. Over residues 214–231 the composition is skewed to polar residues; sequence PTSSNEETISSVKPPSPN. 2 positions are modified to phosphoserine: Ser229 and Ser232. 7 WD repeats span residues 271 to 299, 311 to 339, 350 to 379, 390 to 420, 432 to 460, 472 to 500, and 510 to 538; these read GHSD…RLWN, GHSS…RIWN, HGHT…KLWH, GHTG…KIWS, AHIG…KQWD, GHIE…KVWE, and NHSE…YLWL.

A part of the E3 ubiquitin ligase Skp1-Cullin-1-F-box (SCF) complex. Interacts with cul1, skp1 and phosphorylated zip1.

The protein resides in the nucleus. Probably recognizes and binds to some phosphorylated proteins and promotes their ubiquitination and degradation. Required for the inactivation of zip1 via ubiquitination. The chain is F-box/WD repeat-containing protein pof1 (pof1) from Schizosaccharomyces pombe (strain 972 / ATCC 24843) (Fission yeast).